The chain runs to 364 residues: tRNA 2-selenouridine synthase (364 aa).

The 124-residue stretch at leucine 14 to isoleucine 137 folds into the Rhodanese domain. Cysteine 97 serves as the catalytic S-selanylcysteine intermediate.

This sequence belongs to the SelU family. As to quaternary structure, monomer.

The catalysed reaction is 5-methylaminomethyl-2-thiouridine(34) in tRNA + selenophosphate + (2E)-geranyl diphosphate + H2O + H(+) = 5-methylaminomethyl-2-selenouridine(34) in tRNA + (2E)-thiogeraniol + phosphate + diphosphate. The enzyme catalyses 5-methylaminomethyl-2-thiouridine(34) in tRNA + (2E)-geranyl diphosphate = 5-methylaminomethyl-S-(2E)-geranyl-thiouridine(34) in tRNA + diphosphate. It carries out the reaction 5-methylaminomethyl-S-(2E)-geranyl-thiouridine(34) in tRNA + selenophosphate + H(+) = 5-methylaminomethyl-2-(Se-phospho)selenouridine(34) in tRNA + (2E)-thiogeraniol. It catalyses the reaction 5-methylaminomethyl-2-(Se-phospho)selenouridine(34) in tRNA + H2O = 5-methylaminomethyl-2-selenouridine(34) in tRNA + phosphate. In terms of biological role, involved in the post-transcriptional modification of the uridine at the wobble position (U34) of tRNA(Lys), tRNA(Glu) and tRNA(Gln). Catalyzes the conversion of 2-thiouridine (S2U-RNA) to 2-selenouridine (Se2U-RNA). Acts in a two-step process involving geranylation of 2-thiouridine (S2U) to S-geranyl-2-thiouridine (geS2U) and subsequent selenation of the latter derivative to 2-selenouridine (Se2U) in the tRNA chain. The polypeptide is tRNA 2-selenouridine synthase (Shigella flexneri).